Here is a 288-residue protein sequence, read N- to C-terminus: Sulfur carrier protein FdhD (288 aa).

C122 acts as the Cysteine persulfide intermediate in catalysis. Residue 268 to 273 (FVRGER) coordinates Mo-bis(molybdopterin guanine dinucleotide).

Belongs to the FdhD family.

It is found in the cytoplasm. Required for formate dehydrogenase (FDH) activity. Acts as a sulfur carrier protein that transfers sulfur from IscS to the molybdenum cofactor prior to its insertion into FDH. In Anaeromyxobacter dehalogenans (strain 2CP-C), this protein is Sulfur carrier protein FdhD.